The sequence spans 401 residues: Argininosuccinate synthase (401 aa).

8-16 (AYSGGLDTS) is an ATP binding site. Residue Tyr87 participates in L-citrulline binding. Gly117 provides a ligand contact to ATP. L-aspartate is bound by residues Thr119, Asn123, and Asp124. Residue Asn123 participates in L-citrulline binding. Residues Arg127, Ser175, Glu259, and Tyr271 each coordinate L-citrulline.

The protein belongs to the argininosuccinate synthase family. Type 1 subfamily. Homotetramer.

The protein localises to the cytoplasm. The catalysed reaction is L-citrulline + L-aspartate + ATP = 2-(N(omega)-L-arginino)succinate + AMP + diphosphate + H(+). It functions in the pathway amino-acid biosynthesis; L-arginine biosynthesis; L-arginine from L-ornithine and carbamoyl phosphate: step 2/3. This chain is Argininosuccinate synthase, found in Paenarthrobacter aurescens (strain TC1).